The sequence spans 614 residues: MSGIKKQKTENQQKSTNVVYQAHHVSRNKRGQVVGTRGGFRGCTVWLTGLSGAGKTTISFALEEYLVSHAIPCYSLDGDNVRHGLNRNLGFSPGDREENIRRIAEVAKLFADAGLVCITSFISPFAKDRENARKIHESAGLPFFEIFVDAPLNICESRDVKGLYKRARAGEIKGFTGIDSDYEKPETPERVLKTNLSTVSDCVHQVVELLQEQNIVPYTIIKDIHELFVPENKLDHVRAEAETLPSLSITKLDLQWVQVLSEGWATPLKGFMREKEYLQVMHFDTLLDDGVINMSIPIVLPVSAEDKTRLEGCSKFVLAHGGRRVAILRDAEFYEHRKEERCSRVWGTTCTKHPHIKMVMESGDWLVGGDLQVLEKIRWNDGLDQYRLTPLELKQKCKEMNADAVFAFQLRNPVHNGHALLMQDTRRRLLERGYKHPVLLLHPLGGWTKDDDVPLDWRMKQHAAVLEEGVLDPKSTIVAIFPSPMLYAGPTEVQWHCRSRMIAGANFYIVGRDPAGMPHPETKKDLYEPTHGGKVLSMAPGLTSVEIIPFRVAAYNKAKKAMDFYDPARHNEFDFISGTRMRKLAREGENPPDGFMAPKAWKVLTDYYRSLEKN.

An adenylyl-sulfate kinase region spans residues 1-215; that stretch reads MSGIKKQKTE…VVELLQEQNI (215 aa). Position 52–57 (52–57) interacts with ATP; sequence GAGKTT. Adenosine 5'-phosphosulfate contacts are provided by residues 79–82, Phe-91, 96–99, 122–123, Lys-161, and 174–175; these read DNVR, REEN, IS, and GF. ATP contacts are provided by residues Ser-197, 409–412, 511–515, and Ala-553; these read QLRN and GRDPA. Residues 224–614 form a sulfate adenylyltransferase region; sequence IHELFVPENK…TDYYRSLEKN (391 aa).

In the N-terminal section; belongs to the APS kinase family. This sequence in the C-terminal section; belongs to the sulfate adenylyltransferase family. Expressed in cartilage and adrenal gland.

The enzyme catalyses sulfate + ATP + H(+) = adenosine 5'-phosphosulfate + diphosphate. It carries out the reaction adenosine 5'-phosphosulfate + ATP = 3'-phosphoadenylyl sulfate + ADP + H(+). Its pathway is sulfur metabolism; sulfate assimilation. Bifunctional enzyme with both ATP sulfurylase and APS kinase activity, which mediates two steps in the sulfate activation pathway. The first step is the transfer of a sulfate group to ATP to yield adenosine 5'-phosphosulfate (APS), and the second step is the transfer of a phosphate group from ATP to APS yielding 3'-phosphoadenylylsulfate/PAPS, the activated sulfate donor used by sulfotransferases. In mammals, PAPS is the sole source of sulfate while APS appears to only be an intermediate in the sulfate-activation pathway. Plays indirectly an important role in skeletogenesis during postnatal growth. This Homo sapiens (Human) protein is Bifunctional 3'-phosphoadenosine 5'-phosphosulfate synthase 2 (PAPSS2).